We begin with the raw amino-acid sequence, 171 residues long: Cytochrome c oxidase subunit 5b-2, mitochondrial (171 aa).

Residues 1 to 54 constitute a mitochondrion transit peptide; sequence MWRRIVSSHLKSISAVGSCAAPSCRHAVVESTHLSLSTRASSIPAYSSIFSRLI. Cysteine 121, cysteine 145, and cysteine 148 together coordinate Zn(2+).

The protein belongs to the cytochrome c oxidase subunit 5B (TC 3.D.4.11) family.

The protein resides in the mitochondrion inner membrane. Functionally, this protein is one of the nuclear-coded polypeptide chains of cytochrome c oxidase, the terminal oxidase in mitochondrial electron transport. The sequence is that of Cytochrome c oxidase subunit 5b-2, mitochondrial (COX5B-2) from Arabidopsis thaliana (Mouse-ear cress).